We begin with the raw amino-acid sequence, 425 residues long: Lipoyl synthase, mitochondrial (425 aa).

The N-terminal 33 residues, 1–33, are a transit peptide targeting the mitochondrion; sequence MAASSTRLRCLYASSSTWKTSPSQSLISLSRRY. Positions 17–55 are disordered; that stretch reads TWKTSPSQSLISLSRRYATTSSAPPTPSDESSSTLPKRR. Residues 33–51 are compositionally biased toward polar residues; sequence YATTSSAPPTPSDESSSTL. Positions 142, 147, 153, 173, 177, 180, and 388 each coordinate [4Fe-4S] cluster. The 222-residue stretch at 156–377 folds into the Radical SAM core domain; sequence GSDKSAATAT…RQRALEMGFL (222 aa).

The protein belongs to the radical SAM superfamily. Lipoyl synthase family. [4Fe-4S] cluster serves as cofactor.

The protein localises to the mitochondrion. The enzyme catalyses [[Fe-S] cluster scaffold protein carrying a second [4Fe-4S](2+) cluster] + N(6)-octanoyl-L-lysyl-[protein] + 2 oxidized [2Fe-2S]-[ferredoxin] + 2 S-adenosyl-L-methionine + 4 H(+) = [[Fe-S] cluster scaffold protein] + N(6)-[(R)-dihydrolipoyl]-L-lysyl-[protein] + 4 Fe(3+) + 2 hydrogen sulfide + 2 5'-deoxyadenosine + 2 L-methionine + 2 reduced [2Fe-2S]-[ferredoxin]. Its pathway is protein modification; protein lipoylation via endogenous pathway; protein N(6)-(lipoyl)lysine from octanoyl-[acyl-carrier-protein]: step 2/2. Its function is as follows. Catalyzes the radical-mediated insertion of two sulfur atoms into the C-6 and C-8 positions of the octanoyl moiety bound to the lipoyl domains of lipoate-dependent enzymes, thereby converting the octanoylated domains into lipoylated derivatives. The chain is Lipoyl synthase, mitochondrial from Talaromyces marneffei (strain ATCC 18224 / CBS 334.59 / QM 7333) (Penicillium marneffei).